We begin with the raw amino-acid sequence, 264 residues long: MTLQPTAADVGAMYDQYTSLLTDVMAGFIHVGYWEDPSSEETMEVATERMTREVGARLSSSAGQHILDVGCGTGKSAVQIANTHGVQITGITVSKSQIEEAQALYGSAVQAGQVSYQFANAMDLPFADASFDGAYAIESLVHMDDRRTALQNIARVLRPGSRLAIADLCLDAHCPNPEALARFHELFQVPPMSSGEELQELLRETGFRVLEFTDIRDNVRPVCKFLEKKALSLEGEVGEKLLEIATSMATLKELGYAFITAERI.

Residues glutamine 97 and histidine 142 each contribute to the S-adenosyl-L-methionine site.

The protein belongs to the methyltransferase superfamily.

It catalyses the reaction desmethylrestrictinol + S-adenosyl-L-methionine = restrictinol + S-adenosyl-L-homocysteine + H(+). It functions in the pathway antifungal biosynthesis. O-methyltransferase; part of the gene cluster that mediates the biosynthesis of the tetrahydropyranyl antifungal agent restricticin that acts as an inhibitor of CYP51 and blocks the ergosterol biosynthesis. Within the pathway, resE uses S-adenosylmethionine to methylate position C4 of desmethylrestrictinol to produce restrictinol. The highly reducing polyketide synthase resH, the short chain dehydrogenase resG, the cyclase resF, the FAD-dependent monooxygenase resA and the enoylreductase resD are required to generate the first stable intermediate desmethylrestrictinol. ResH with resD biosynthesize the first polyketide chain intermediate that is reduced by resG, followed by epoxidation by resA before 6-endo cyclization via epoxide opening by resF leads to desmethylrestrictinol. The methyltransferase resE then catalyzes the C4 O-methylation of desmethylrestrictinol to produce restrictinol, and the nonribosomal peptide synthetase resC catalyzes the C3 esterification of restrictinol with glycine that leads to restricticin. This Aspergillus sclerotiorum protein is O-methyltransferase resE.